A 206-amino-acid polypeptide reads, in one-letter code: MRLTQKQIVWLKVLLHLAGLLPFLWLVWAVNQGGLSADPVKDIQHFTGRTALKFLLATLLVSPLARYAKQPLLIRTRRLLGLWCFAWATLHLTSYALLELGINNLALLGQELITRPYLTLGIISWFILFALTLTSTQAAQRKLGKRWQRLHNFVYLVAILAPIHYLWSVKILSPQPVIYALLALVLLAWRYKTFRQWWRSFAGKML.

4 consecutive transmembrane segments (helical) span residues 8–28 (IVWLKVLLHLAGLLPFLWLVW), 82–102 (LWCFAWATLHLTSYALLELGI), 116–136 (PYLTLGIISWFILFALTLTST), and 153–173 (FVYLVAILAPIHYLWSVKILS).

This sequence belongs to the MsrQ family. As to quaternary structure, heterodimer of a catalytic subunit (MsrP) and a heme-binding subunit (MsrQ). FMN is required as a cofactor. Requires heme b as cofactor.

Its subcellular location is the cell inner membrane. In terms of biological role, part of the MsrPQ system that repairs oxidized periplasmic proteins containing methionine sulfoxide residues (Met-O), using respiratory chain electrons. Thus protects these proteins from oxidative-stress damage caused by reactive species of oxygen and chlorine generated by the host defense mechanisms. MsrPQ is essential for the maintenance of envelope integrity under bleach stress, rescuing a wide series of structurally unrelated periplasmic proteins from methionine oxidation. MsrQ provides electrons for reduction to the reductase catalytic subunit MsrP, using the quinone pool of the respiratory chain. The chain is Protein-methionine-sulfoxide reductase heme-binding subunit MsrQ from Citrobacter koseri (strain ATCC BAA-895 / CDC 4225-83 / SGSC4696).